A 144-amino-acid polypeptide reads, in one-letter code: Endoribonuclease YbeY (144 aa).

Residues H105, H109, and D115 each coordinate Zn(2+).

The protein belongs to the endoribonuclease YbeY family. It depends on Zn(2+) as a cofactor.

Its subcellular location is the cytoplasm. Its function is as follows. Single strand-specific metallo-endoribonuclease involved in late-stage 70S ribosome quality control and in maturation of the 3' terminus of the 16S rRNA. This Chlorobium limicola (strain DSM 245 / NBRC 103803 / 6330) protein is Endoribonuclease YbeY.